The primary structure comprises 334 residues: Mucin-15 (334 aa).

An N-terminal signal peptide occupies residues Met-1–Gly-23. Topologically, residues Lys-24–Thr-236 are extracellular. N-linked (GlcNAc...) asparagine glycans are attached at residues Asn-30, Asn-61, Asn-79, Asn-90, Asn-148, Asn-155, Asn-163, Asn-218, and Asn-225. The interval Thr-64–Ser-104 is disordered. Positions Leu-77–Glu-94 are enriched in polar residues. A helical transmembrane segment spans residues Gly-237–Gly-257. Over Tyr-258–Val-334 the chain is Cytoplasmic. Residues Pro-304–Val-334 are disordered.

In terms of processing, highly glycosylated (N- and O-linked carbohydrates). Expressed in spleen, thymus, prostate, testis, ovary, small intestine, colon, peripheral blood leukocyte, bone marrow, lymph node and lung.

It localises to the cell membrane. It is found in the secreted. Its function is as follows. May play a role in the cell adhesion to the extracellular matrix. This chain is Mucin-15 (MUC15), found in Homo sapiens (Human).